Here is a 342-residue protein sequence, read N- to C-terminus: N-acetyl-gamma-glutamyl-phosphate reductase (342 aa).

C146 is an active-site residue.

The protein belongs to the NAGSA dehydrogenase family. Type 1 subfamily.

It localises to the cytoplasm. The catalysed reaction is N-acetyl-L-glutamate 5-semialdehyde + phosphate + NADP(+) = N-acetyl-L-glutamyl 5-phosphate + NADPH + H(+). It functions in the pathway amino-acid biosynthesis; L-arginine biosynthesis; N(2)-acetyl-L-ornithine from L-glutamate: step 3/4. Functionally, catalyzes the NADPH-dependent reduction of N-acetyl-5-glutamyl phosphate to yield N-acetyl-L-glutamate 5-semialdehyde. The polypeptide is N-acetyl-gamma-glutamyl-phosphate reductase (Frankia casuarinae (strain DSM 45818 / CECT 9043 / HFP020203 / CcI3)).